The sequence spans 145 residues: uncharacterized protein (145 aa).

Met-1 is modified (N-acetylmethionine). A disordered region spans residues 15-41 (QLKNNSGGTNGDRNSGANNGGGENSAP). Residues 16-27 (LKNNSGGTNGDR) show a composition bias toward polar residues. Phosphoserine occurs at positions 121 and 126. Residues 125–145 (NSFDKQNAKNDDDEDDDDFFD) are disordered. Over residues 135-145 (DDDEDDDDFFD) the composition is skewed to acidic residues.

This sequence belongs to the PDCD5 family.

This is an uncharacterized protein from Saccharomyces cerevisiae (strain ATCC 204508 / S288c) (Baker's yeast).